The chain runs to 185 residues: Ribosome-recycling factor (185 aa).

This sequence belongs to the RRF family.

It is found in the cytoplasm. In terms of biological role, responsible for the release of ribosomes from messenger RNA at the termination of protein biosynthesis. May increase the efficiency of translation by recycling ribosomes from one round of translation to another. This Listeria innocua serovar 6a (strain ATCC BAA-680 / CLIP 11262) protein is Ribosome-recycling factor.